The primary structure comprises 452 residues: Caspase-2 (452 aa).

N-acetylalanine is present on A2. A propeptide spanning residues 2-169 (AAPSAGSWST…TVEHSLDNKD (168 aa)) is cleaved from the precursor. The region spanning 32-121 (MHPHHQETLK…GHLEDMLLTT (90 aa)) is the CARD domain. S157 bears the Phosphoserine mark. Catalysis depends on residues H277 and C320. A propeptide spanning residues 326-333 (DRGVDQQD) is cleaved from the precursor. The span at 327-336 (RGVDQQDGKN) shows a compositional bias: basic and acidic residues. The interval 327 to 354 (RGVDQQDGKNHAGSPGCEESDAGKEKLP) is disordered. Position 340 is a phosphoserine (S340).

It belongs to the peptidase C14A family. As to quaternary structure, heterotetramer that consists of two anti-parallel arranged heterodimers, each one formed by a p18 subunit and a p12 subunit. Forms a complex named the PIDDosome with PIDD1 and CRADD. Interacts with NOL3 (via CARD domain); inhibits CASP2 activity in a phosphorylation-dependent manner. In terms of processing, the mature protease can process its own propeptide, but not that of other caspases. Expressed at higher levels in the embryonic lung, liver and kidney than in the heart and brain. In adults, higher level expression is seen in the placenta, lung, kidney, and pancreas than in the heart, brain, liver and skeletal muscle.

The enzyme catalyses Strict requirement for an Asp residue at P1, with 316-Asp being essential for proteolytic activity and has a preferred cleavage sequence of Val-Asp-Val-Ala-Asp-|-.. Is a regulator of the cascade of caspases responsible for apoptosis execution. Might function by either activating some proteins required for cell death or inactivating proteins necessary for cell survival. Associates with PIDD1 and CRADD to form the PIDDosome, a complex that activates CASP2 and triggers apoptosis in response to genotoxic stress. Functionally, acts as a positive regulator of apoptosis. In terms of biological role, acts as a negative regulator of apoptosis. Its function is as follows. May function as an endogenous apoptosis inhibitor that antagonizes caspase activation and cell death. The polypeptide is Caspase-2 (CASP2) (Homo sapiens (Human)).